We begin with the raw amino-acid sequence, 377 residues long: Chaperone protein DnaJ (377 aa).

Positions 5–70 (DYYQVLGVSR…KKRSAYDQLG (66 aa)) constitute a J domain. A CR-type zinc finger spans residues 138–216 (GVTKIISFKT…CYGEGRYINT (79 aa)). Residues Cys151, Cys154, Cys168, Cys171, Cys190, Cys193, Cys204, and Cys207 each coordinate Zn(2+). CXXCXGXG motif repeat units lie at residues 151-158 (CDACAGKG), 168-175 (CPTCRGSG), 190-197 (CQTCRGAG), and 204-211 (CTKCYGEG).

This sequence belongs to the DnaJ family. As to quaternary structure, homodimer. Zn(2+) serves as cofactor.

It localises to the cytoplasm. Functionally, participates actively in the response to hyperosmotic and heat shock by preventing the aggregation of stress-denatured proteins and by disaggregating proteins, also in an autonomous, DnaK-independent fashion. Unfolded proteins bind initially to DnaJ; upon interaction with the DnaJ-bound protein, DnaK hydrolyzes its bound ATP, resulting in the formation of a stable complex. GrpE releases ADP from DnaK; ATP binding to DnaK triggers the release of the substrate protein, thus completing the reaction cycle. Several rounds of ATP-dependent interactions between DnaJ, DnaK and GrpE are required for fully efficient folding. Also involved, together with DnaK and GrpE, in the DNA replication of plasmids through activation of initiation proteins. The chain is Chaperone protein DnaJ from Orientia tsutsugamushi (strain Boryong) (Rickettsia tsutsugamushi).